A 182-amino-acid chain; its full sequence is CDP-diacylglycerol--glycerol-3-phosphate 3-phosphatidyltransferase (182 aa).

Over 1-12 the chain is Cytoplasmic; it reads MRLNIPTCLTLF. The chain crosses the membrane as a helical span at residues 13–37; that stretch reads RLIIVPFFIIVFYLPFSNASFYSAI. Residues 38–60 are Periplasmic-facing; sequence IFILAALTDWFDGFLARKLNQTT. A helical membrane pass occupies residues 61–81; the sequence is CFGAFLDPVADKIIVVIGLIL. Residues 82-86 lie on the Cytoplasmic side of the membrane; it reads IIEYF. Residues 87 to 107 traverse the membrane as a helical segment; it reads HSFWITIPSLIMIIREIIISS. Residues 108-145 are Periplasmic-facing; that stretch reads LREWMAEIGKNNLLSVSLISKLKTSIQMLAIFSLLWKE. Residues 146–168 traverse the membrane as a helical segment; it reads TYIIIIIGILSLYVSSILAFLSM. Over 169–181 the chain is Cytoplasmic; it reads LKYFYIAWRDLFR.

Belongs to the CDP-alcohol phosphatidyltransferase class-I family.

It localises to the cell inner membrane. The enzyme catalyses a CDP-1,2-diacyl-sn-glycerol + sn-glycerol 3-phosphate = a 1,2-diacyl-sn-glycero-3-phospho-(1'-sn-glycero-3'-phosphate) + CMP + H(+). It functions in the pathway phospholipid metabolism; phosphatidylglycerol biosynthesis; phosphatidylglycerol from CDP-diacylglycerol: step 1/2. Catalyzes the conversion of cytidine diphosphate diacylglycerol (CDP-DG) and glycerol 3-phosphate into phosphatidylglycerol. Essential for the synthesis of anionic phospholipids, thereby playing a role in balancing the ratio of zwitterionic and anionic phospholipids, which is thought to be important for normal membrane function. The protein is CDP-diacylglycerol--glycerol-3-phosphate 3-phosphatidyltransferase of Wigglesworthia glossinidia brevipalpis.